Here is a 400-residue protein sequence, read N- to C-terminus: Phosphoglycerate kinase (400 aa).

Substrate-binding positions include 24–26 (DFN), arginine 40, 63–66 (HFGR), arginine 121, and arginine 154. Residues lysine 205, glycine 296, glutamate 327, and 356–359 (GGDS) contribute to the ATP site.

It belongs to the phosphoglycerate kinase family. Monomer.

Its subcellular location is the cytoplasm. The enzyme catalyses (2R)-3-phosphoglycerate + ATP = (2R)-3-phospho-glyceroyl phosphate + ADP. It functions in the pathway carbohydrate degradation; glycolysis; pyruvate from D-glyceraldehyde 3-phosphate: step 2/5. The sequence is that of Phosphoglycerate kinase from Thermosynechococcus vestitus (strain NIES-2133 / IAM M-273 / BP-1).